A 45-amino-acid polypeptide reads, in one-letter code: Large ribosomal subunit protein bL34 (45 aa).

It belongs to the bacterial ribosomal protein bL34 family.

The protein is Large ribosomal subunit protein bL34 of Opitutus terrae (strain DSM 11246 / JCM 15787 / PB90-1).